We begin with the raw amino-acid sequence, 3164 residues long: Protein eyes shut homolog (3164 aa).

Residues 1-21 (MTDKSIIILSLMVFHSSFING) form the signal peptide. Residues Asn42, Asn105, Asn117, and Asn166 are each glycosylated (N-linked (GlcNAc...) asparagine). EGF-like domains are found at residues 170-212 (KQQF…KYCQ), 213-254 (ELDA…KNCS), and 256-292 (IIGQ…PFCE). Disulfide bonds link Cys174-Cys189, Cys183-Cys200, Cys202-Cys211, Cys217-Cys228, Cys222-Cys242, Cys244-Cys253, Cys260-Cys270, Cys265-Cys280, and Cys282-Cys291. 4 N-linked (GlcNAc...) asparagine glycosylation sites follow: Asn225, Asn252, Asn269, and Asn272. 2 N-linked (GlcNAc...) asparagine glycosylation sites follow: Asn311 and Asn343. EGF-like domains are found at residues 332–368 (DVSE…LLCK) and 370–406 (IQTS…KNCE). 5 cysteine pairs are disulfide-bonded: Cys336/Cys347, Cys341/Cys356, Cys358/Cys367, Cys374/Cys385, and Cys396/Cys405. N-linked (GlcNAc...) asparagine glycosylation occurs at Asn382. N-linked (GlcNAc...) asparagine glycosylation is found at Asn506, Asn521, and Asn566. The EGF-like 6 domain occupies 567–602 (TTDDQENECQHEAICKDEINRPRCSCSLSYIGRLCV). Disulfide bonds link Cys575/Cys590 and Cys592/Cys601. 2 N-linked (GlcNAc...) asparagine glycosylation sites follow: Asn611 and Asn654. The region spanning 643–679 (DTEDCKSVSCKNGTTSIHLRGYFFCKCVPGFKGTQRE) is the EGF-like 7 domain. Disulfide bonds link Cys652-Cys667, Cys685-Cys696, Cys690-Cys705, Cys707-Cys719, Cys737-Cys748, and Cys742-Cys757. The EGF-like 8; calcium-binding domain maps to 681 to 720 (DIDECASHPCKNGATCIDQPGNYFCQCVPPFKVVDGFSCL). In terms of domain architecture, EGF-like 9; calcium-binding spans 733–769 (DIDDCILNACEHNSTCKDLHLSYQCVCLSGWEGNFSE). Residues Asn745, Asn766, Asn782, Asn783, and Asn805 are each glycosylated (N-linked (GlcNAc...) asparagine). The EGF-like 10; calcium-binding domain maps to 771 to 807 (ESNECKMNPCKNNSTCIDLYKSYRCECTSGWTGQNCS). Intrachain disulfides connect Cys775–Cys786, Cys780–Cys795, Cys797–Cys806, Cys813–Cys824, Cys818–Cys835, Cys837–Cys846, Cys853–Cys866, Cys860–Cys876, Cys878–Cys887, Cys894–Cys905, Cys899–Cys914, Cys916–Cys925, Cys932–Cys943, Cys937–Cys952, Cys954–Cys963, Cys970–Cys981, Cys975–Cys990, Cys992–Cys1001, Cys1008–Cys1019, Cys1013–Cys1028, Cys1030–Cys1039, Cys1046–Cys1056, Cys1051–Cys1065, Cys1067–Cys1076, Cys1083–Cys1094, Cys1088–Cys1103, Cys1105–Cys1114, Cys1121–Cys1137, Cys1131–Cys1147, Cys1149–Cys1158, Cys1165–Cys1176, Cys1170–Cys1185, and Cys1187–Cys1196. 3 consecutive EGF-like domains span residues 809 to 847 (EINE…RFCH), 849 to 888 (RYNP…KNCE), and 890 to 926 (DVKE…SLCE). N-linked (GlcNAc...) asparagine glycans are attached at residues Asn862 and Asn863. The EGF-like 14; calcium-binding domain maps to 928–964 (EINECSSEPCKNNGTCVDLTNRFFCNCEPGYHGPFCE). Asn940 carries N-linked (GlcNAc...) asparagine glycosylation. An EGF-like 15 domain is found at 966–1002 (DVNKCKISPCLDEENCVYRTDGYNCLCAPGYTGINCE). Residues 1004 to 1040 (NLDECLSEPCLHDGVCIDGINHYTCDCKSGFFGTHCE) enclose the EGF-like 16; calcium-binding domain. 3 EGF-like domains span residues 1042–1077 (NAND…TQCK), 1079–1115 (KIND…AYCE), and 1117–1159 (SIDN…QFCE). The EGF-like 20; calcium-binding domain maps to 1161 to 1197 (NINECSSSPCLHGADCEDHINGYVCKCQPGWSGHHCE). N-linked (GlcNAc...) asparagine glycans are attached at residues Asn1509, Asn1522, Asn1906, Asn1941, Asn1960, and Asn2033. The 181-residue stretch at 1883 to 2063 (FSCVRYYGDS…AVKNYHINNC (181 aa)) folds into the Laminin G-like 1 domain. 4 cysteine pairs are disulfide-bonded: Cys2037–Cys2063, Cys2103–Cys2114, Cys2108–Cys2128, and Cys2130–Cys2139. An EGF-like 21 domain is found at 2099–2140 (APSVCQQDVCHNGGTCHPIFLSRGIVSFQCDCPLHFTGRFCE). Residues 2145–2339 (LFFPSFNGNS…NIENCHVPWC (195 aa)) form the Laminin G-like 2 domain. N-linked (GlcNAc...) asparagine glycans are attached at residues Asn2170, Asn2185, and Asn2228. Cystine bridges form between Cys2308–Cys2339, Cys2339–Cys2350, Cys2344–Cys2359, Cys2375–Cys2386, Cys2380–Cys2396, and Cys2398–Cys2407. EGF-like domains are found at residues 2335-2368 (HVPW…YSGK) and 2371-2408 (QFAS…PLCT). N-linked (GlcNAc...) asparagine glycosylation occurs at Asn2347. N-linked (GlcNAc...) asparagine glycosylation is found at Asn2412, Asn2453, Asn2484, Asn2506, and Asn2532. Residues 2419 to 2609 (SGTDAFGYTS…PNAGRSVGQC (191 aa)) enclose the Laminin G-like 3 domain. Cystine bridges form between Cys2576–Cys2609, Cys2614–Cys2625, and Cys2619–Cys2634. 2 EGF-like domains span residues 2610–2646 (HASP…AFCT) and 2648–2689 (TVST…IYCE). A glycan (N-linked (GlcNAc...) asparagine) is linked at Asn2635. Cystine bridges form between Cys2636/Cys2645, Cys2652/Cys2668, Cys2662/Cys2677, and Cys2679/Cys2688. The region spanning 2717–2895 (DPSFRSNELS…AKGGSNVGDC (179 aa)) is the Laminin G-like 4 domain. Asn2775, Asn2800, and Asn2824 each carry an N-linked (GlcNAc...) asparagine glycan. 4 disulfide bridges follow: Cys2868–Cys2895, Cys2900–Cys2911, Cys2905–Cys2920, and Cys2922–Cys2931. EGF-like domains lie at 2896-2932 (DGTA…NTCN) and 2933-2970 (QSVY…RYCE). A glycan (N-linked (GlcNAc...) asparagine) is linked at Asn2914. N-linked (GlcNAc...) asparagine glycosylation is present at Asn2932. 3 cysteine pairs are disulfide-bonded: Cys2937–Cys2948, Cys2942–Cys2958, and Cys2960–Cys2969. N-linked (GlcNAc...) asparagine glycosylation is present at Asn2951. Asn2971, Asn3006, Asn3036, Asn3057, Asn3073, and Asn3082 each carry an N-linked (GlcNAc...) asparagine glycan. In terms of domain architecture, Laminin G-like 5 spans 2975–3164 (FSTAKFMGNS…YDGDEQNEVT (190 aa)).

It belongs to the EYS family.

Its subcellular location is the cell projection. The protein localises to the cilium. The protein resides in the photoreceptor outer segment. It is found in the cytoplasm. It localises to the cytoskeleton. Its subcellular location is the cilium axoneme. The protein localises to the microtubule organizing center. The protein resides in the centrosome. It is found in the secreted. It localises to the extracellular space. Its subcellular location is the extracellular matrix. The protein localises to the interphotoreceptor matrix. In terms of biological role, required to maintain the integrity of photoreceptor cells. Specifically required for normal morphology of the photoreceptor ciliary pocket, and might thus facilitate protein trafficking between the photoreceptor inner and outer segments via the transition zone. The protein is Protein eyes shut homolog (EYS) of Pongo abelii (Sumatran orangutan).